Consider the following 420-residue polypeptide: 2',3'-cyclic-nucleotide 3'-phosphodiesterase (420 aa).

Position 9 is a phosphoserine (Ser-9). Tyr-110 carries the post-translational modification Phosphotyrosine. 3 positions are modified to phosphoserine: Ser-169, Ser-227, and Ser-239. His-250 serves as the catalytic Proton acceptor. Residue Thr-252 participates in substrate binding. Thr-262 is subject to Phosphothreonine. His-329 acts as the Proton donor in catalysis. Thr-331 contacts substrate. Position 358 is a phosphoserine (Ser-358). Cysteine methyl ester is present on Cys-417. Cys-417 carries the S-farnesyl cysteine lipid modification. The propeptide at 418 to 420 (TII) is removed in mature form.

The protein belongs to the 2H phosphoesterase superfamily. CNPase family. In terms of assembly, exists as monomers and homodimers.

It is found in the membrane. Its subcellular location is the melanosome. The enzyme catalyses a nucleoside 2',3'-cyclic phosphate + H2O = a nucleoside 2'-phosphate + H(+). Functionally, catalyzes the formation of 2'-nucleotide products from 2',3'-cyclic substrates. May participate in RNA metabolism in the myelinating cell, CNP is the third most abundant protein in central nervous system myelin. The polypeptide is 2',3'-cyclic-nucleotide 3'-phosphodiesterase (Rattus norvegicus (Rat)).